A 240-amino-acid polypeptide reads, in one-letter code: Zinc import ATP-binding protein ZnuC (240 aa).

In terms of domain architecture, ABC transporter spans 1–219 (MSLLSIAALD…PAYRAMFGLD (219 aa)). Position 36–43 (36–43 (GPNGSGKT)) interacts with ATP.

It belongs to the ABC transporter superfamily. Zinc importer (TC 3.A.1.15.5) family. As to quaternary structure, the complex is composed of two ATP-binding proteins (ZnuC), two transmembrane proteins (ZnuB) and a solute-binding protein (ZnuA).

The protein resides in the cell inner membrane. The catalysed reaction is Zn(2+)(out) + ATP(in) + H2O(in) = Zn(2+)(in) + ADP(in) + phosphate(in) + H(+)(in). In terms of biological role, part of the ABC transporter complex ZnuABC involved in zinc import. Responsible for energy coupling to the transport system. This chain is Zinc import ATP-binding protein ZnuC, found in Chromohalobacter salexigens (strain ATCC BAA-138 / DSM 3043 / CIP 106854 / NCIMB 13768 / 1H11).